Consider the following 74-residue polypeptide: ATP synthase subunit c (74 aa).

2 helical membrane passes run 8-28 (FIGAGLAAIGMIGSGIGVGNI) and 52-72 (IGFAVTEAIALFALVVALMVL).

It belongs to the ATPase C chain family. As to quaternary structure, F-type ATPases have 2 components, F(1) - the catalytic core - and F(0) - the membrane proton channel. F(1) has five subunits: alpha(3), beta(3), gamma(1), delta(1), epsilon(1). F(0) has three main subunits: a(1), b(2) and c(10-14). The alpha and beta chains form an alternating ring which encloses part of the gamma chain. F(1) is attached to F(0) by a central stalk formed by the gamma and epsilon chains, while a peripheral stalk is formed by the delta and b chains.

Its subcellular location is the cell inner membrane. F(1)F(0) ATP synthase produces ATP from ADP in the presence of a proton or sodium gradient. F-type ATPases consist of two structural domains, F(1) containing the extramembraneous catalytic core and F(0) containing the membrane proton channel, linked together by a central stalk and a peripheral stalk. During catalysis, ATP synthesis in the catalytic domain of F(1) is coupled via a rotary mechanism of the central stalk subunits to proton translocation. Its function is as follows. Key component of the F(0) channel; it plays a direct role in translocation across the membrane. A homomeric c-ring of between 10-14 subunits forms the central stalk rotor element with the F(1) delta and epsilon subunits. The protein is ATP synthase subunit c of Paramagnetospirillum magneticum (strain ATCC 700264 / AMB-1) (Magnetospirillum magneticum).